The primary structure comprises 541 residues: MKRLRGTLPSDARHAWHPEPLGPAHRDGWDTRDDDRVWDVVVIGSGASGSVAADRLVRQGLDVLMIEEGFRLSPDLGNPELDDMCRTALARDGQGGWTDEGWPWTTSNLGGGTVFYGGASWRYRPFDFDPSELVDAGGLDVRWPYGLAELAPYYDVLERRLGVCGGEEGEGSRGPAHPPTAAAEVLYEAGTALGYEPFPTPLAINRHAHGGRSACERNSLCVSHQCSTGAKGDAVAVFLAPLAAHPNFTLRTGVRALRLNQDRPDAVGSVTCLDRLGRTTHRVRARSFVVACNAIQSAALLLRSRGGRAPDGVGNHSGLVGRGLTMKLSEYVSGVVDAPSAATLADWRAHAGPFSTIAFLDHYLDADCPTGVGGMIYESKNDMPSRIRDDVLELRIETILADHPNLDNRVRLSSHADEDGVPAVVIDYTPDPRDLRRLAYMTDVCERLLRKAGATGIAHEESGFAQGSCHLHGTCRAGDDPATSVVDGWGRVHSAPNVYVVDGGFMPYPGGLNPTLTIQAHALRSAKAVAGDLVSRHTAHV.

Residues methionine 1–tryptophan 29 are disordered. Histidine 470 acts as the Proton acceptor in catalysis.

This sequence belongs to the GMC oxidoreductase family. It depends on FAD as a cofactor.

It carries out the reaction 6'''-deamino-6'''-hydroxyneomycin C + O2 = 6'''-deamino-6'''-oxoneomycin C + H2O2. The catalysed reaction is paromamine + O2 = 6'-oxoparomamine + H2O2. It functions in the pathway antibiotic biosynthesis; neomycin biosynthesis. In terms of biological role, glucosaminyl-6'-oxidase involved in the biosynthetic pathway of neomycin by mediating FAD-dependent dehydrogenation of paromamine to 6'-dehydro-6'-oxoparomamine. Works in combination with neamine transaminase to replace the 6-hydroxy group of paromamine with an amino group. Also able to collaborate with neomycin C transaminase to replace the 6'''-hydroxy group of 6'''-hydroxyneomycin C with an amino group. The protein is Paromamine 6'-oxidase (neoG) of Streptomyces fradiae (Streptomyces roseoflavus).